A 330-amino-acid chain; its full sequence is Ketol-acid reductoisomerase (NADP(+)) (330 aa).

The region spanning 2 to 182 is the KARI N-terminal Rossmann domain; that stretch reads VKVYYDADAN…GCTKAGVFET (181 aa). NADP(+) contacts are provided by residues 25–28, R48, S51, and 83–86; these read YGSQ and DEIQ. H108 is an active-site residue. Residue G134 participates in NADP(+) binding. The KARI C-terminal knotted domain maps to 183 to 328; that stretch reads SFREETETDL…ARLREMMPWL (146 aa). The Mg(2+) site is built by D191, E195, E227, and E231. S252 serves as a coordination point for substrate.

It belongs to the ketol-acid reductoisomerase family. It depends on Mg(2+) as a cofactor.

The enzyme catalyses (2R)-2,3-dihydroxy-3-methylbutanoate + NADP(+) = (2S)-2-acetolactate + NADPH + H(+). It catalyses the reaction (2R,3R)-2,3-dihydroxy-3-methylpentanoate + NADP(+) = (S)-2-ethyl-2-hydroxy-3-oxobutanoate + NADPH + H(+). The protein operates within amino-acid biosynthesis; L-isoleucine biosynthesis; L-isoleucine from 2-oxobutanoate: step 2/4. Its pathway is amino-acid biosynthesis; L-valine biosynthesis; L-valine from pyruvate: step 2/4. Involved in the biosynthesis of branched-chain amino acids (BCAA). Catalyzes an alkyl-migration followed by a ketol-acid reduction of (S)-2-acetolactate (S2AL) to yield (R)-2,3-dihydroxy-isovalerate. In the isomerase reaction, S2AL is rearranged via a Mg-dependent methyl migration to produce 3-hydroxy-3-methyl-2-ketobutyrate (HMKB). In the reductase reaction, this 2-ketoacid undergoes a metal-dependent reduction by NADPH to yield (R)-2,3-dihydroxy-isovalerate. In Desulforamulus reducens (strain ATCC BAA-1160 / DSM 100696 / MI-1) (Desulfotomaculum reducens), this protein is Ketol-acid reductoisomerase (NADP(+)).